The sequence spans 212 residues: Ribosome biogenesis protein RLP7 (212 aa).

The protein belongs to the universal ribosomal protein uL30 family.

The protein resides in the nucleus. It is found in the nucleolus. Its function is as follows. Involved in the biogenesis of the 60S ribosomal subunit. May act as a specificity factor that binds precursor rRNAs and tethers the enzymes that carry out the early 5' to 3' exonucleolytic reactions that generate the mature rRNAs. In Cyberlindnera jadinii (Torula yeast), this protein is Ribosome biogenesis protein RLP7 (RLP7).